Consider the following 107-residue polypeptide: Anti-adapter protein IraM (107 aa).

Belongs to the IraM/RssC family.

The protein localises to the cytoplasm. Functionally, inhibits RpoS proteolysis by regulating RssB activity, thereby increasing the stability of the sigma stress factor RpoS during magnesium starvation. The chain is Anti-adapter protein IraM from Escherichia coli O17:K52:H18 (strain UMN026 / ExPEC).